The following is a 392-amino-acid chain: Tryptophan synthase beta chain 1 (392 aa).

Position 85 is an N6-(pyridoxal phosphate)lysine (K85).

The protein belongs to the TrpB family. As to quaternary structure, tetramer of two alpha and two beta chains. The cofactor is pyridoxal 5'-phosphate.

The catalysed reaction is (1S,2R)-1-C-(indol-3-yl)glycerol 3-phosphate + L-serine = D-glyceraldehyde 3-phosphate + L-tryptophan + H2O. It functions in the pathway amino-acid biosynthesis; L-tryptophan biosynthesis; L-tryptophan from chorismate: step 5/5. Its function is as follows. The beta subunit is responsible for the synthesis of L-tryptophan from indole and L-serine. The polypeptide is Tryptophan synthase beta chain 1 (trpB1) (Methanothermobacter thermautotrophicus (strain ATCC 29096 / DSM 1053 / JCM 10044 / NBRC 100330 / Delta H) (Methanobacterium thermoautotrophicum)).